Consider the following 457-residue polypeptide: MLGVEALRNERSRLRQEIADLRSAICKKEQSLRELEEALANGGGNGDGLADEGGERNTGTIQTQLTNDDIARYSRQLILPNFGVQGQLRLKNSSVLIVGMGGLGCPAAQYLAAAGVGYLGLIDYDQVERSNFHRQTLHTEARCGMAKTESARIALLELNPSCRIHCHSELINSHNASNIMRSYDVVLDCSDNVATRYLLNDACVIFRKPLVSGSALKMDGQLTVYNYGAQGPCYRCIYPVPPPPEAVTNCGDGGVLGAVTGVIGSLQALETIKIIVGGLGEVLAGRMLIFDGTTGQFRNIRIRSKRSNCHACSSQPLITDLIDYELFCGMHATDKDHPLQLLESDQRLDVQTYHDKLESQPHLLFDVRSTAEFEICQLSTNAINLPLAEVLDDSYLKRFAVELQNKDLPIIVLCRRGNDSQIAVQHMRNRFPDHSIRDLIGGLHAWTRKVDPDFPIY.

A disordered region spans residues 40-60; it reads ANGGGNGDGLADEGGERNTGT. Threonine 63 is modified (phosphothreonine). ATP contacts are provided by residues glycine 102, aspartate 123, 130–134, lysine 147, and 191–192; these read SNFHR and DN. 2 residues coordinate Zn(2+): cysteine 233 and cysteine 236. Residue cysteine 250 is the Glycyl thioester intermediate; for adenylyltransferase activity of the active site. The Zn(2+) site is built by cysteine 309 and cysteine 312. The 98-residue stretch at 358 to 455 folds into the Rhodanese domain; it reads ESQPHLLFDV…WTRKVDPDFP (98 aa). Catalysis depends on cysteine 414, which acts as the Cysteine persulfide intermediate; for sulfurtransferase activity.

This sequence in the N-terminal section; belongs to the HesA/MoeB/ThiF family. UBA4 subfamily. The cofactor is Zn(2+).

Its subcellular location is the cytoplasm. It is found in the cytosol. It carries out the reaction [molybdopterin-synthase sulfur-carrier protein]-C-terminal Gly-Gly + ATP + H(+) = [molybdopterin-synthase sulfur-carrier protein]-C-terminal Gly-Gly-AMP + diphosphate. The catalysed reaction is [molybdopterin-synthase sulfur-carrier protein]-C-terminal Gly-Gly-AMP + S-sulfanyl-L-cysteinyl-[cysteine desulfurase] + AH2 = [molybdopterin-synthase sulfur-carrier protein]-C-terminal-Gly-aminoethanethioate + L-cysteinyl-[cysteine desulfurase] + A + AMP + 2 H(+). It participates in tRNA modification; 5-methoxycarbonylmethyl-2-thiouridine-tRNA biosynthesis. It functions in the pathway cofactor biosynthesis; molybdopterin biosynthesis. Its function is as follows. Plays a central role in 2-thiolation of mcm(5)S(2)U at tRNA wobble positions of cytosolic tRNA(Lys), tRNA(Glu) and tRNA(Gln). Also essential during biosynthesis of the molybdenum cofactor. Acts by mediating the C-terminal thiocarboxylation of sulfur carriers URM1 and MOCS2A. Its N-terminus first activates URM1 and MOCS2A as acyl-adenylates (-COAMP), then the persulfide sulfur on the catalytic cysteine is transferred to URM1 and MOCS2A to form thiocarboxylation (-COSH) of their C-terminus. The reaction probably involves hydrogen sulfide that is generated from the persulfide intermediate and that acts as a nucleophile towards URM1 and MOCS2A. Subsequently, a transient disulfide bond is formed. Does not use thiosulfate as sulfur donor; NFS1 probably acting as a sulfur donor for thiocarboxylation reactions. The polypeptide is Adenylyltransferase and sulfurtransferase MOCS3 (Drosophila willistoni (Fruit fly)).